The sequence spans 740 residues: Ion-translocating oxidoreductase complex subunit C (740 aa).

2 consecutive 4Fe-4S ferredoxin-type domains span residues 369–397 (GEPQEEQSCIRCSACADACPADLLPQQLY) and 407–436 (KATTHNIADCIECGACAWVCPSNIPLVQYF). [4Fe-4S] cluster is bound by residues Cys377, Cys380, Cys383, Cys387, Cys416, Cys419, Cys422, and Cys426. A disordered region spans residues 602–718 (KLEQQQANAE…EEQVDPRKAA (117 aa)).

It belongs to the 4Fe4S bacterial-type ferredoxin family. RnfC subfamily. In terms of assembly, the complex is composed of six subunits: RsxA, RsxB, RsxC, RsxD, RsxE and RsxG. It depends on [4Fe-4S] cluster as a cofactor.

It is found in the cell inner membrane. Its function is as follows. Part of a membrane-bound complex that couples electron transfer with translocation of ions across the membrane. Required to maintain the reduced state of SoxR. The protein is Ion-translocating oxidoreductase complex subunit C of Shigella sonnei (strain Ss046).